Consider the following 461-residue polypeptide: Probable tubulin polyglutamylase TTLL9 (461 aa).

The disordered stretch occupies residues 1–21 (MSRPKNQNYKGHGLQKGKERE). The region spanning 22 to 402 (QRASIRFKTT…EARLTGREKR (381 aa)) is the TTL domain. ATP-binding positions include K149 and 155 to 156 (QG). Residue Q155 coordinates a protein. Residues 182 to 208 (SLEAQPARNTVNPSGSHDTRSSDDQKD) form a disordered region. Over residues 188–197 (ARNTVNPSGS) the composition is skewed to polar residues. The segment covering 198-208 (HDTRSSDDQKD) has biased composition (basic and acidic residues). Residues 218–221 (QRYI) and 231–233 (KFD) each bind ATP. L-glutamate is bound at residue R257. Residue 276-277 (TN) participates in ATP binding. K294 serves as a coordination point for L-glutamate. 3 residues coordinate Mg(2+): D348, E361, and N363. L-glutamate is bound at residue K379.

This sequence belongs to the tubulin--tyrosine ligase family. Requires Mg(2+) as cofactor.

Its subcellular location is the cytoplasm. The protein localises to the cytoskeleton. The protein resides in the cilium basal body. It localises to the flagellum axoneme. The enzyme catalyses (L-glutamyl)(n)-gamma-L-glutamyl-L-glutamyl-[protein] + L-glutamate + ATP = (L-glutamyl)(n+1)-gamma-L-glutamyl-L-glutamyl-[protein] + ADP + phosphate + H(+). In terms of biological role, probable tubulin polyglutamylase that generates side chains of glutamate on the gamma-carboxyl group of specific glutamate residues within the C-terminal tail of target proteins. Similar to TTLL1, may acquire enzymatic activity only in complex with other proteins as it is most likely lacking domains important for autonomous activity. Mediates tubulin polyglutamylation which induces establishment of microtubule heterogeneity in sperm flagella, thereby playing a role in normal motile flagella axoneme structure and sperm flagella beating pattern. This Bos taurus (Bovine) protein is Probable tubulin polyglutamylase TTLL9 (TTLL9).